We begin with the raw amino-acid sequence, 282 residues long: Lipoyl synthase (282 aa).

Cys37, Cys42, Cys48, Cys63, Cys67, Cys70, and Ser274 together coordinate [4Fe-4S] cluster. Positions 49–263 (WGKGTATFMI…KTIGLEKGFS (215 aa)) constitute a Radical SAM core domain.

It belongs to the radical SAM superfamily. Lipoyl synthase family. [4Fe-4S] cluster is required as a cofactor.

The protein resides in the cytoplasm. It carries out the reaction [[Fe-S] cluster scaffold protein carrying a second [4Fe-4S](2+) cluster] + N(6)-octanoyl-L-lysyl-[protein] + 2 oxidized [2Fe-2S]-[ferredoxin] + 2 S-adenosyl-L-methionine + 4 H(+) = [[Fe-S] cluster scaffold protein] + N(6)-[(R)-dihydrolipoyl]-L-lysyl-[protein] + 4 Fe(3+) + 2 hydrogen sulfide + 2 5'-deoxyadenosine + 2 L-methionine + 2 reduced [2Fe-2S]-[ferredoxin]. Its pathway is protein modification; protein lipoylation via endogenous pathway; protein N(6)-(lipoyl)lysine from octanoyl-[acyl-carrier-protein]: step 2/2. In terms of biological role, catalyzes the radical-mediated insertion of two sulfur atoms into the C-6 and C-8 positions of the octanoyl moiety bound to the lipoyl domains of lipoate-dependent enzymes, thereby converting the octanoylated domains into lipoylated derivatives. The chain is Lipoyl synthase from Bacteroides thetaiotaomicron (strain ATCC 29148 / DSM 2079 / JCM 5827 / CCUG 10774 / NCTC 10582 / VPI-5482 / E50).